Here is a 163-residue protein sequence, read N- to C-terminus: Putative 4-hydroxy-4-methyl-2-oxoglutarate aldolase (163 aa).

Residues 76-79 (GDMI) and Arg-98 each bind substrate. Position 99 (Asp-99) interacts with a divalent metal cation.

It belongs to the class II aldolase/RraA-like family. Homotrimer. A divalent metal cation is required as a cofactor.

The enzyme catalyses 4-hydroxy-4-methyl-2-oxoglutarate = 2 pyruvate. The catalysed reaction is oxaloacetate + H(+) = pyruvate + CO2. In terms of biological role, catalyzes the aldol cleavage of 4-hydroxy-4-methyl-2-oxoglutarate (HMG) into 2 molecules of pyruvate. Also contains a secondary oxaloacetate (OAA) decarboxylase activity due to the common pyruvate enolate transition state formed following C-C bond cleavage in the retro-aldol and decarboxylation reactions. This is Putative 4-hydroxy-4-methyl-2-oxoglutarate aldolase from Pseudomonas fluorescens (strain SBW25).